We begin with the raw amino-acid sequence, 229 residues long: Potassium/proton antiporter CemA (229 aa).

Transmembrane regions (helical) follow at residues 7 to 27 (FIPL…SFTF), 107 to 127 (ILHF…SILG), 154 to 174 (ILLL…ELVI), and 189 to 209 (IISG…KYWI).

The protein belongs to the CemA family.

The protein resides in the plastid. Its subcellular location is the chloroplast inner membrane. The enzyme catalyses K(+)(in) + H(+)(out) = K(+)(out) + H(+)(in). Contributes to K(+)/H(+) antiport activity by supporting proton efflux to control proton extrusion and homeostasis in chloroplasts in a light-dependent manner to modulate photosynthesis. Prevents excessive induction of non-photochemical quenching (NPQ) under continuous-light conditions. Indirectly promotes efficient inorganic carbon uptake into chloroplasts. The sequence is that of Potassium/proton antiporter CemA from Glycine max (Soybean).